The following is a 349-amino-acid chain: NAC domain-containing protein JA2 (349 aa).

In terms of domain architecture, NAC spans 14–163; the sequence is LPPGFRFYPT…EWVLCRIYKK (150 aa). A DNA-binding region spans residues 111 to 169; it reads VGIKKALVFYVGKAPKGSKTNWIMHEYRLFESSRKNNGSSKLDEWVLCRIYKKNSSGPK. The disordered stretch occupies residues 169 to 194; that stretch reads KPLMSGLHSSNEYSHGSSTSSSSQFD. A compositionally biased stretch (low complexity) spans 177 to 191; it reads SSNEYSHGSSTSSSS.

Expressed in guard cells of the epidermis.

It is found in the nucleus. Transcription factor involved in abscisic acid-mediated stomatal closure. Regulates the expression of NCED1, a gene involved in the biosynthesis of abscisic acid (ABA). Required for the stomatal closure induced by the bacterial pathogen Pseudomonas syringae pv tomato DC3000, but not for stomatal reopening. This chain is NAC domain-containing protein JA2, found in Solanum lycopersicum (Tomato).